A 384-amino-acid polypeptide reads, in one-letter code: Succinyl-diaminopimelate desuccinylase (384 aa).

Histidine 72 is a Zn(2+) binding site. Aspartate 74 is an active-site residue. Aspartate 105 is a binding site for Zn(2+). Glutamate 139 acts as the Proton acceptor in catalysis. 3 residues coordinate Zn(2+): glutamate 140, glutamate 168, and histidine 355.

Belongs to the peptidase M20A family. DapE subfamily. In terms of assembly, homodimer. The cofactor is Zn(2+). It depends on Co(2+) as a cofactor.

It catalyses the reaction N-succinyl-(2S,6S)-2,6-diaminopimelate + H2O = (2S,6S)-2,6-diaminopimelate + succinate. The protein operates within amino-acid biosynthesis; L-lysine biosynthesis via DAP pathway; LL-2,6-diaminopimelate from (S)-tetrahydrodipicolinate (succinylase route): step 3/3. In terms of biological role, catalyzes the hydrolysis of N-succinyl-L,L-diaminopimelic acid (SDAP), forming succinate and LL-2,6-diaminopimelate (DAP), an intermediate involved in the bacterial biosynthesis of lysine and meso-diaminopimelic acid, an essential component of bacterial cell walls. The protein is Succinyl-diaminopimelate desuccinylase of Blochmanniella pennsylvanica (strain BPEN).